The sequence spans 2476 residues: Non-reducing polyketide synthase pkdA (2476 aa).

The interval 22-230 (PNLNDAYLQS…VISEARLATL (209 aa)) is N-terminal acylcarrier protein transacylase domain (SAT). Residue cysteine 142 is the Nucleophile; for transacylase activity of the active site. The active-site Proton donor/acceptor; for transacylase activity is the histidine 261. The Ketosynthase family 3 (KS3) domain maps to 388–805 (DESIAVVGMA…GSNASLVVTQ (418 aa)). Active-site for beta-ketoacyl synthase activity residues include cysteine 554, histidine 689, and histidine 728. The segment at 919-1204 (FGGQRSSFVG…GSGVTNLASR (286 aa)) is malonyl-CoA:ACP transacylase (MAT). Positions 1290-1417 (QKGLWTFVGY…GRITFQTPKQ (128 aa)) are N-terminal hotdog fold. A PKS/mFAS DH domain is found at 1290 to 1592 (QKGLWTFVGY…FVEVSIAGMS (303 aa)). Residues 1321–1590 (YVSAHVIAQT…LHFVEVSIAG (270 aa)) are product template (PT) domain. Residue histidine 1325 is the Proton acceptor; for dehydratase activity of the active site. Positions 1445–1592 (QTIQGSRNIY…FVEVSIAGMS (148 aa)) are C-terminal hotdog fold. Aspartate 1501 (proton donor; for dehydratase activity) is an active-site residue. Positions 1626–1649 (DVSKNEKDAKAPSKKKESTSKSPG) are disordered. The region spanning 1650 to 1724 (HDILARVRTL…SLVKCIGANM (75 aa)) is the Carrier domain. Serine 1684 carries the post-translational modification O-(pantetheine 4'-phosphoryl)serine. Positions 1727–1766 (SDTSRTGDDSSDDLETASAESETSSGINNEDSHNIDRQQI) are disordered. A compositionally biased stretch (low complexity) spans 1742 to 1751 (TASAESETSS). Positions 1881–2030 (ELLRQYPEHA…DCEKTPSSHL (150 aa)) are methyltransferase (CMeT) domain. Residues 2094–2340 (VTGATGSLGS…SWCPVDDVAA (247 aa)) form an NADPH-binding domain region.

Requires pantetheine 4'-phosphate as cofactor.

The catalysed reaction is propanoyl-CoA + 3 malonyl-CoA + AH2 + 2 S-adenosyl-L-methionine + H(+) = 2-ethyl-4,6-dihydroxy-3,5-dimethylbenzaldehyde + A + 2 S-adenosyl-L-homocysteine + 3 CO2 + 4 CoA + H2O. Its pathway is secondary metabolite biosynthesis. Non-reducing polyketide synthase that synthesizes 6-ethyl-2,4-dihydroxy-3,5-dimethylbenzaldehyde via condensation of one propanoyl-CoA starter unit with 3 malonyl-CoA units, as well as 2 methylation steps. This Emericella nidulans (strain FGSC A4 / ATCC 38163 / CBS 112.46 / NRRL 194 / M139) (Aspergillus nidulans) protein is Non-reducing polyketide synthase pkdA.